A 615-amino-acid chain; its full sequence is Putative binding protein BRA0576/BS1330_II0571 (615 aa).

The N-terminal stretch at Met-1–Ala-29 is a signal peptide.

Belongs to the bacterial solute-binding protein 5 family.

Its subcellular location is the periplasm. This is Putative binding protein BRA0576/BS1330_II0571 from Brucella suis biovar 1 (strain 1330).